The chain runs to 1185 residues: DNA-directed RNA polymerase subunit beta' (1185 aa).

Residues C60, C62, C75, and C78 each contribute to the Zn(2+) site. D449, D451, and D453 together coordinate Mg(2+). The Zn(2+) site is built by C774, C853, C860, and C863.

The protein belongs to the RNA polymerase beta' chain family. The RNAP catalytic core consists of 2 alpha, 1 beta, 1 beta' and 1 omega subunit. When a sigma factor is associated with the core the holoenzyme is formed, which can initiate transcription. It depends on Mg(2+) as a cofactor. Zn(2+) is required as a cofactor.

It catalyses the reaction RNA(n) + a ribonucleoside 5'-triphosphate = RNA(n+1) + diphosphate. Its function is as follows. DNA-dependent RNA polymerase catalyzes the transcription of DNA into RNA using the four ribonucleoside triphosphates as substrates. The chain is DNA-directed RNA polymerase subunit beta' from Desulforamulus reducens (strain ATCC BAA-1160 / DSM 100696 / MI-1) (Desulfotomaculum reducens).